The following is a 128-amino-acid chain: Large ribosomal subunit protein bL21 (128 aa).

The interval 104–128 is disordered; the sequence is GKTPTVGPRPKKEKVVEPAEGEGDH. Over residues 116–128 the composition is skewed to basic and acidic residues; it reads EKVVEPAEGEGDH.

Belongs to the bacterial ribosomal protein bL21 family. As to quaternary structure, part of the 50S ribosomal subunit. Contacts protein L20.

Its function is as follows. This protein binds to 23S rRNA in the presence of protein L20. In Nitrobacter hamburgensis (strain DSM 10229 / NCIMB 13809 / X14), this protein is Large ribosomal subunit protein bL21.